A 70-amino-acid chain; its full sequence is Translation initiation factor IF-1 (70 aa).

Residues 1 to 70 (MKETNLSIKG…LTKGRIIYRH (70 aa)) enclose the S1-like domain.

This sequence belongs to the IF-1 family. As to quaternary structure, component of the 30S ribosomal translation pre-initiation complex which assembles on the 30S ribosome in the order IF-2 and IF-3, IF-1 and N-formylmethionyl-tRNA(fMet); mRNA recruitment can occur at any time during PIC assembly.

It localises to the cytoplasm. One of the essential components for the initiation of protein synthesis. Stabilizes the binding of IF-2 and IF-3 on the 30S subunit to which N-formylmethionyl-tRNA(fMet) subsequently binds. Helps modulate mRNA selection, yielding the 30S pre-initiation complex (PIC). Upon addition of the 50S ribosomal subunit IF-1, IF-2 and IF-3 are released leaving the mature 70S translation initiation complex. This is Translation initiation factor IF-1 from Mycoplasmoides gallisepticum (strain R(low / passage 15 / clone 2)) (Mycoplasma gallisepticum).